The following is a 71-amino-acid chain: DNA-directed RNA polymerase subunit epsilon (71 aa).

Belongs to the RNA polymerase subunit epsilon family. In terms of assembly, RNAP is composed of a core of 2 alpha, a beta and a beta' subunit. The core is associated with a delta subunit, and at least one of epsilon or omega. When a sigma factor is associated with the core the holoenzyme is formed, which can initiate transcription.

It catalyses the reaction RNA(n) + a ribonucleoside 5'-triphosphate = RNA(n+1) + diphosphate. In terms of biological role, a non-essential component of RNA polymerase (RNAP). In Staphylococcus carnosus (strain TM300), this protein is DNA-directed RNA polymerase subunit epsilon.